The chain runs to 80 residues: Centromere protein X (80 aa).

This sequence belongs to the CENP-X/MHF2 family. Heterodimer with CENPX, sometimes called MHF; this interaction stabilizes both partners. MHF heterodimers can assemble to form tetrameric structures. MHF also coassemble with CENPT-CENPW heterodimers at centromeres to form the tetrameric CENP-T-W-S-X complex. Forms a discrete complex with FANCM and CENPX, called FANCM-MHF; this interaction, probably mediated by direct binding between CENPS and FANCM, leads to synergistic activation of double-stranded DNA binding and strongly stimulates FANCM-mediated DNA remodeling. Recruited by FANCM to the Fanconi anemia (FA) core complex, which consists of CENPS, CENPX, FANCA, FANCB, FANCC, FANCE, FANCF, FANCG, FANCL, FANCM, FAAP24 and FAAP100. The FA core complex associates with Bloom syndrome (BLM) complex, which consists of at least BLM, DNA topoisomerase 3-alpha (TOP3A), RMI1/BLAP75, RPA1/RPA70 and RPA2/RPA32. The super complex between FA and BLM is called BRAFT.

The protein resides in the nucleus. Its subcellular location is the chromosome. The protein localises to the centromere. It localises to the kinetochore. In terms of biological role, DNA-binding component of the Fanconi anemia (FA) core complex. Required for the normal activation of the FA pathway, leading to monoubiquitination of the FANCI-FANCD2 complex in response to DNA damage, cellular resistance to DNA cross-linking drugs, and prevention of chromosomal breakage. In complex with CENPS (MHF heterodimer), crucial cofactor for FANCM in both binding and ATP-dependent remodeling of DNA. Stabilizes FANCM. In complex with CENPS and FANCM (but not other FANC proteins), rapidly recruited to blocked forks and promotes gene conversion at blocked replication forks. In complex with CENPS, CENPT and CENPW (CENP-T-W-S-X heterotetramer), involved in the formation of a functional kinetochore outer plate, which is essential for kinetochore-microtubule attachment and faithful mitotic progression. As a component of MHF and CENP-T-W-S-X complexes, binds DNA and bends it to form a nucleosome-like structure. DNA-binding function is fulfilled in the presence of CENPS, with the following preference for DNA substates: Holliday junction &gt; double-stranded &gt; splay arm &gt; single-stranded. Does not bind DNA on its own. The polypeptide is Centromere protein X (CENPX) (Gallus gallus (Chicken)).